Here is a 63-residue protein sequence, read N- to C-terminus: Large ribosomal subunit protein bL28 (63 aa).

This sequence belongs to the bacterial ribosomal protein bL28 family.

The polypeptide is Large ribosomal subunit protein bL28 (Treponema denticola (strain ATCC 35405 / DSM 14222 / CIP 103919 / JCM 8153 / KCTC 15104)).